Here is a 208-residue protein sequence, read N- to C-terminus: Large ribosomal subunit protein uL4 (208 aa).

Positions 58–77 (RGGGRKPWRQKGTGRARQGS) are disordered. Positions 60–71 (GGRKPWRQKGTG) are enriched in basic residues.

This sequence belongs to the universal ribosomal protein uL4 family. In terms of assembly, part of the 50S ribosomal subunit.

Its function is as follows. One of the primary rRNA binding proteins, this protein initially binds near the 5'-end of the 23S rRNA. It is important during the early stages of 50S assembly. It makes multiple contacts with different domains of the 23S rRNA in the assembled 50S subunit and ribosome. Functionally, forms part of the polypeptide exit tunnel. The protein is Large ribosomal subunit protein uL4 of Caldicellulosiruptor bescii (strain ATCC BAA-1888 / DSM 6725 / KCTC 15123 / Z-1320) (Anaerocellum thermophilum).